The primary structure comprises 367 residues: Dihydroxyacetone phosphate transaminase Cj1437c (367 aa).

K219 is subject to N6-(pyridoxal phosphate)lysine.

It belongs to the class-II pyridoxal-phosphate-dependent aminotransferase family. The cofactor is pyridoxal 5'-phosphate.

The catalysed reaction is dihydroxyacetone phosphate + L-glutamate = (S)-serinol phosphate + 2-oxoglutarate. The protein operates within capsule biogenesis; capsule polysaccharide biosynthesis. In terms of biological role, pyridoxal phosphate (PLP)-dependent transaminase involved in the biosynthesis of amidated D-glucuronic acid structures found on the capsular polysaccharide (CPS) of C.jejuni. Catalyzes the transamination of dihydroxyacetone phosphate (DHAP) to (S)-serinol phosphate in the presence of L-glutamate. Less active with L-aspartate. No activity with dihydroxyacetone or L-alanine. The protein is Dihydroxyacetone phosphate transaminase Cj1437c of Campylobacter jejuni subsp. jejuni serotype O:2 (strain ATCC 700819 / NCTC 11168).